A 379-amino-acid chain; its full sequence is Anhydro-N-acetylmuramic acid kinase (379 aa).

An ATP-binding site is contributed by 9 to 16; that stretch reads GTSADGVD.

The protein belongs to the anhydro-N-acetylmuramic acid kinase family.

The catalysed reaction is 1,6-anhydro-N-acetyl-beta-muramate + ATP + H2O = N-acetyl-D-muramate 6-phosphate + ADP + H(+). The protein operates within amino-sugar metabolism; 1,6-anhydro-N-acetylmuramate degradation. Its pathway is cell wall biogenesis; peptidoglycan recycling. In terms of biological role, catalyzes the specific phosphorylation of 1,6-anhydro-N-acetylmuramic acid (anhMurNAc) with the simultaneous cleavage of the 1,6-anhydro ring, generating MurNAc-6-P. Is required for the utilization of anhMurNAc either imported from the medium or derived from its own cell wall murein, and thus plays a role in cell wall recycling. This chain is Anhydro-N-acetylmuramic acid kinase, found in Synechococcus sp. (strain CC9605).